Consider the following 355-residue polypeptide: Replication-associated protein (355 aa).

Residues 11–114 (SHRNANTFLT…PLAVFERGTF (104 aa)) enclose the CRESS-DNA virus Rep endonuclease domain. An RCR-1 motif is present at residues 18–21 (FLTY). The a divalent metal cation site is built by E52, H60, and H62. The RCR-2 motif lies at 60 to 62 (HLH). Y100 acts as the For DNA cleavage activity in catalysis. Positions 100 to 103 (YILK) match the RCR-3 motif. E104 provides a ligand contact to a divalent metal cation. An oligomerization region spans residues 175–187 (SANKLFPEIQEEF). ATP is bound at residue 229 to 236 (GPTRTGKS). Positions 252 to 270 (VDWSSYNEDAIYNIVDDIP) are transactivation. The Nuclear localization signal motif lies at 292–303 (KYGKKKKVQKKS).

Belongs to the geminiviridae Rep protein family. As to quaternary structure, homooligomer. Rep binds to repeated DNA motifs (iterons). Forms the O-complex, which is a Rep-DNA complex involved in the initiation of RCR. Part of the C- and V-complexes which are RepA-Rep-DNA complexes involved in the c-sense and v-sense transcription. Requires Mg(2+) as cofactor. The cofactor is Mn(2+).

It localises to the host nucleus. Functionally, essential for the replication of viral ssDNA. The closed circular ssDNA genome is first converted to a superhelical dsDNA. Rep binds a specific region at the genome origin of replication. It introduces an endonucleolytic nick within the conserved sequence 5'-TAATATTAC-3' in the intergenic region of the genome present in all geminiviruses, thereby initiating the rolling circle replication (RCR). Following cleavage, binds covalently to the 5'-phosphate of DNA as a tyrosyl ester. The cleavage gives rise to a free 3'-OH that serves as a primer for the cellular DNA polymerase. The polymerase synthesizes the (+) strand DNA by rolling circle mechanism. After one round of replication, a Rep-catalyzed nucleotidyl transfer reaction releases a circular single-stranded virus genome, thereby terminating the replication. Displays origin-specific DNA cleavage, nucleotidyl transferase, ATPase and helicase activities. Acts as an inhibitor of C-sense gene transcription. The sequence is that of Replication-associated protein from Maize streak virus genotype A (isolate South Africa) (MSV).